Consider the following 794-residue polypeptide: FT-interacting protein 1 (794 aa).

Basic and acidic residues predominate over residues 1 to 27 (MAAKDGAKSQEDYKLKDMKPELGERWP). The segment at 1–34 (MAAKDGAKSQEDYKLKDMKPELGERWPHGGQRGG) is disordered. 3 consecutive C2 domains span residues 37-158 (WIGS…PQWY), 198-321 (VQGE…SKWY), and 364-492 (YISD…THSY). 4 residues coordinate Ca(2+): aspartate 76, aspartate 123, glutamate 125, and glutamate 131. 4 helical membrane-spanning segments follow: residues 510–532 (LAVR…PLLP), 595–615 (IVSV…VCYW), 619–639 (LTTI…ELIL), and 737–757 (LFVI…FKII).

It belongs to the MCTP family. As to quaternary structure, interacts with FT in phloem companion cells. Ca(2+) serves as cofactor. Expressed in the vascular tissues of roots, cotyledons and rosette leaves. Specifically located in the phloem including companion cells. Observed in flowers. Not detected in the shoot apical meristem.

Its subcellular location is the endoplasmic reticulum membrane. The protein localises to the cell junction. The protein resides in the plasmodesma. In terms of biological role, involved in the export of FT from the phloem companion cells to the sieve elements through the plasmodesmata. Regulates flowering time under long days. May function as a signaling molecule by regulating the trafficking of other regulators. This is FT-interacting protein 1 from Arabidopsis thaliana (Mouse-ear cress).